Consider the following 199-residue polypeptide: uncharacterized protein (199 aa).

A disordered region spans residues 1–30 (MEDAAAPGRTEGVLERQGAPPAAGQGGALV). Residues 71–101 (RANATNKLTVIAEQIQHLQEQARKVLEDAHR) are a coiled coil.

This is an uncharacterized protein from Homo sapiens (Human).